Consider the following 160-residue polypeptide: NADH-quinone oxidoreductase subunit B (160 aa).

Cysteine 37, cysteine 38, cysteine 102, and cysteine 132 together coordinate [4Fe-4S] cluster.

It belongs to the complex I 20 kDa subunit family. As to quaternary structure, NDH-1 is composed of 14 different subunits. Subunits NuoB, C, D, E, F, and G constitute the peripheral sector of the complex. Requires [4Fe-4S] cluster as cofactor.

The protein resides in the cell inner membrane. It catalyses the reaction a quinone + NADH + 5 H(+)(in) = a quinol + NAD(+) + 4 H(+)(out). In terms of biological role, NDH-1 shuttles electrons from NADH, via FMN and iron-sulfur (Fe-S) centers, to quinones in the respiratory chain. Couples the redox reaction to proton translocation (for every two electrons transferred, four hydrogen ions are translocated across the cytoplasmic membrane), and thus conserves the redox energy in a proton gradient. This is NADH-quinone oxidoreductase subunit B from Cupriavidus pinatubonensis (strain JMP 134 / LMG 1197) (Cupriavidus necator (strain JMP 134)).